A 364-amino-acid chain; its full sequence is Spermidine/putrescine import ATP-binding protein PotA (364 aa).

The 231-residue stretch at 5-235 folds into the ABC transporter domain; it reads LSFKDVSKGF…PVNRFVADFI (231 aa). 37-44 provides a ligand contact to ATP; sequence GPSGCGKT.

The protein belongs to the ABC transporter superfamily. Spermidine/putrescine importer (TC 3.A.1.11.1) family. As to quaternary structure, the complex is composed of two ATP-binding proteins (PotA), two transmembrane proteins (PotB and PotC) and a solute-binding protein (PotD).

It is found in the cell membrane. It carries out the reaction ATP + H2O + polyamine-[polyamine-binding protein]Side 1 = ADP + phosphate + polyamineSide 2 + [polyamine-binding protein]Side 1.. Its function is as follows. Part of the ABC transporter complex PotABCD involved in spermidine/putrescine import. Responsible for energy coupling to the transport system. The chain is Spermidine/putrescine import ATP-binding protein PotA from Staphylococcus epidermidis (strain ATCC 35984 / DSM 28319 / BCRC 17069 / CCUG 31568 / BM 3577 / RP62A).